We begin with the raw amino-acid sequence, 594 residues long: Solute carrier family 13 member 1 (594 aa).

The next 5 helical transmembrane spans lie at 13–33 (FLLV…IRTK), 40–60 (ILFV…ITAL), 77–97 (VASA…CLAT), 113–133 (VMMV…STAF), and 134–154 (LSMW…VEAV). A glycan (N-linked (GlcNAc...) asparagine) is linked at Asn174. A compositionally biased stretch (basic and acidic residues) spans 192 to 220 (TNEKKEKTKPAPGSSHDKGKVSRKMETEK). Positions 192 to 226 (TNEKKEKTKPAPGSSHDKGKVSRKMETEKNAVTGA) are disordered. 8 helical membrane passes run 239-259 (LMCL…ITGT), 283-303 (SWFL…WIWL), 347-367 (IVTL…DPGF), 380-400 (GYVT…LIPA), 461-481 (LSPL…LIVT), 487-507 (ASNP…AEAI), 511-531 (PLQI…LPVA), and 552-572 (AGLG…FTWI). N-linked (GlcNAc...) asparagine glycosylation is present at Asn590.

Belongs to the SLC13A/DASS transporter (TC 2.A.47) family. NADC subfamily. In terms of tissue distribution, highly expressed in kidney and ileum, detected at lower levels in duodenum/jejunum and colon, and at very low levels in cecum, testis, adrenal and adipose tissues. As to expression, expressed in the kidney.

Its subcellular location is the apical cell membrane. It carries out the reaction sulfate(out) + 3 Na(+)(out) = sulfate(in) + 3 Na(+)(in). It catalyses the reaction selenate(out) + 3 Na(+)(out) = selenate(in) + 3 Na(+)(in). The enzyme catalyses thiosulfate(out) + 3 Na(+)(out) = thiosulfate(in) + 3 Na(+)(in). In terms of biological role, sodium:sulfate symporter that mediates sulfate reabsorption in the kidney and small intestine. Can also mediate the transport of selenate and thiosulfate. The chain is Solute carrier family 13 member 1 (Slc13a1) from Mus musculus (Mouse).